The following is a 258-amino-acid chain: Regulatory protein RecX (258 aa).

It belongs to the RecX family.

It is found in the cytoplasm. Modulates RecA activity. The polypeptide is Regulatory protein RecX (Streptococcus gordonii (strain Challis / ATCC 35105 / BCRC 15272 / CH1 / DL1 / V288)).